Consider the following 348-residue polypeptide: Rhodopsin (348 aa).

Methionine 1 is subject to N-acetylmethionine. The Extracellular segment spans residues methionine 1–glutamine 36. Residues asparagine 2 and asparagine 15 are each glycosylated (N-linked (GlcNAc...) asparagine). The helical transmembrane segment at phenylalanine 37–valine 61 threads the bilayer. At threonine 62–asparagine 73 the chain is on the cytoplasmic side. Residues tyrosine 74–tyrosine 96 form a helical membrane-spanning segment. Over threonine 97 to cysteine 110 the chain is Extracellular. Cysteines 110 and 187 form a disulfide. A helical membrane pass occupies residues asparagine 111–isoleucine 133. Residues glutamate 134–tyrosine 136 carry the 'Ionic lock' involved in activated form stabilization motif. At glutamate 134–histidine 152 the chain is on the cytoplasmic side. The chain crosses the membrane as a helical span at residues alanine 153–alanine 173. Topologically, residues glycine 174 to serine 202 are extracellular. Zn(2+) is bound at residue glutamate 201. The helical transmembrane segment at phenylalanine 203–glycine 224 threads the bilayer. The Cytoplasmic portion of the chain corresponds to glutamine 225–arginine 252. Residues methionine 253 to tyrosine 274 traverse the membrane as a helical segment. Over isoleucine 275–isoleucine 286 the chain is Extracellular. Glutamine 279 provides a ligand contact to Zn(2+). The chain crosses the membrane as a helical span at residues phenylalanine 287–methionine 308. Position 296 is an N6-(retinylidene)lysine (lysine 296). Residues methionine 309 to alanine 348 are Cytoplasmic-facing. S-palmitoyl cysteine attachment occurs at residues cysteine 322 and cysteine 323. The interaction with SAG stretch occupies residues aspartate 330–alanine 348. Serine 334 and serine 338 each carry phosphoserine. Phosphothreonine is present on residues threonine 340 and threonine 342. Serine 343 carries the post-translational modification Phosphoserine.

This sequence belongs to the G-protein coupled receptor 1 family. Opsin subfamily. Homodimer. May form a complex composed of RHO, GRK1 and RCVRN in a Ca(2+)-dependent manner; RCVRN prevents the interaction between GRK1 and RHO. Interacts with GRK1. Interacts (phosphorylated form) with SAG. Interacts with GNAT1. Interacts with GNAT3. SAG and G-proteins compete for a common binding site. Interacts with PRCD; the interaction promotes PRCD stability. Forms a complex with ASAP1 and ARF4. Forms a complex with ASAP1, RAB11A, Rabin8/RAB3IP, ARF4 and RAB11FIP3; the complex regulates Golgi-to-cilia rhodopsin/RHO transport in photoreceptors. Post-translationally, phosphorylated on some or all of the serine and threonine residues present in the C-terminal region. In terms of processing, contains one covalently linked retinal chromophore. Upon light absorption, the covalently bound 11-cis-retinal is converted to all-trans-retinal. After hydrolysis of the Schiff base and release of the covalently bound all-trans-retinal, active rhodopsin is regenerated by binding of a fresh molecule of 11-cis-retinal.

It localises to the membrane. The protein localises to the cell projection. Its subcellular location is the cilium. It is found in the photoreceptor outer segment. Photoreceptor required for image-forming vision at low light intensity. Required for photoreceptor cell viability after birth. Light-induced isomerization of 11-cis to all-trans retinal triggers a conformational change that activates signaling via G-proteins. Subsequent receptor phosphorylation mediates displacement of the bound G-protein alpha subunit by the arrestin SAG and terminates signaling. The polypeptide is Rhodopsin (RHO) (Canis lupus familiaris (Dog)).